Here is a 132-residue protein sequence, read N- to C-terminus: Small ribosomal subunit protein uS8 (132 aa).

It belongs to the universal ribosomal protein uS8 family. Part of the 30S ribosomal subunit. Contacts proteins S5 and S12.

Functionally, one of the primary rRNA binding proteins, it binds directly to 16S rRNA central domain where it helps coordinate assembly of the platform of the 30S subunit. This is Small ribosomal subunit protein uS8 from Bifidobacterium longum (strain NCC 2705).